We begin with the raw amino-acid sequence, 601 residues long: NADH-quinone oxidoreductase subunit C/D (601 aa).

The segment at 1–191 is NADH dehydrogenase I subunit C; sequence MKLTRDFPHN…DPFMLDAAKQ (191 aa). Residues 215–601 are NADH dehydrogenase I subunit D; the sequence is DYMFLNLGPN…IDFVMSDVDR (387 aa).

The protein in the N-terminal section; belongs to the complex I 30 kDa subunit family. This sequence in the C-terminal section; belongs to the complex I 49 kDa subunit family. In terms of assembly, NDH-1 is composed of 13 different subunits. Subunits NuoB, CD, E, F, and G constitute the peripheral sector of the complex.

Its subcellular location is the cell inner membrane. It catalyses the reaction a quinone + NADH + 5 H(+)(in) = a quinol + NAD(+) + 4 H(+)(out). In terms of biological role, NDH-1 shuttles electrons from NADH, via FMN and iron-sulfur (Fe-S) centers, to quinones in the respiratory chain. The immediate electron acceptor for the enzyme in this species is believed to be ubiquinone. Couples the redox reaction to proton translocation (for every two electrons transferred, four hydrogen ions are translocated across the cytoplasmic membrane), and thus conserves the redox energy in a proton gradient. The chain is NADH-quinone oxidoreductase subunit C/D from Shewanella oneidensis (strain ATCC 700550 / JCM 31522 / CIP 106686 / LMG 19005 / NCIMB 14063 / MR-1).